A 175-amino-acid polypeptide reads, in one-letter code: Large ribosomal subunit protein uL18 (175 aa).

Belongs to the universal ribosomal protein uL18 family. In terms of assembly, part of the 50S ribosomal subunit. Contacts the 5S and 23S rRNAs.

This is one of the proteins that bind and probably mediate the attachment of the 5S RNA into the large ribosomal subunit, where it forms part of the central protuberance. The polypeptide is Large ribosomal subunit protein uL18 (Methanospirillum hungatei JF-1 (strain ATCC 27890 / DSM 864 / NBRC 100397 / JF-1)).